The chain runs to 154 residues: 3-hydroxyacyl-[acyl-carrier-protein] dehydratase FabZ (154 aa).

Histidine 54 is a catalytic residue.

It belongs to the thioester dehydratase family. FabZ subfamily.

It localises to the cytoplasm. It carries out the reaction a (3R)-hydroxyacyl-[ACP] = a (2E)-enoyl-[ACP] + H2O. In terms of biological role, involved in unsaturated fatty acids biosynthesis. Catalyzes the dehydration of short chain beta-hydroxyacyl-ACPs and long chain saturated and unsaturated beta-hydroxyacyl-ACPs. The chain is 3-hydroxyacyl-[acyl-carrier-protein] dehydratase FabZ from Chlamydia caviae (strain ATCC VR-813 / DSM 19441 / 03DC25 / GPIC) (Chlamydophila caviae).